We begin with the raw amino-acid sequence, 714 residues long: Testis-expressed protein 13D (714 aa).

2 disordered regions span residues G300–D419 and R431–F675. Composition is skewed to basic and acidic residues over residues S307–Q320 and G366–K378. A compositionally biased stretch (basic residues) spans R379 to H392. Residues T403–G416 show a composition bias toward polar residues. 3 stretches are compositionally biased toward basic and acidic residues: residues C495–Q505, C557–Q567, and S636–K646. A RanBP2-type zinc finger spans residues V677–P706.

Belongs to the TEX13 family.

This is Testis-expressed protein 13D from Homo sapiens (Human).